The primary structure comprises 153 residues: Nascent polypeptide-associated complex subunit beta (153 aa).

Disordered regions lie at residues 1–40 and 126–153; these read MSDV…ADDK and LQKE…PKVE. Over residues 23–32 the composition is skewed to basic residues; the sequence is TPRRKVKRAP. An NAC-A/B domain is found at 36 to 101; it reads GADDKKLQLA…GEDKELTELV (66 aa). A compositionally biased stretch (acidic residues) spans 132 to 147; the sequence is EDDDEIPDLVEGENFE.

Belongs to the NAC-beta family. In terms of assembly, part of the nascent polypeptide-associated complex (NAC), consisting of EGD2 and EGD1. NAC associates with ribosomes via EGD1.

The protein localises to the cytoplasm. Its subcellular location is the nucleus. Functionally, component of the nascent polypeptide-associated complex (NAC), a dynamic component of the ribosomal exit tunnel, protecting the emerging polypeptides from interaction with other cytoplasmic proteins to ensure appropriate nascent protein targeting. The NAC complex also promotes mitochondrial protein import by enhancing productive ribosome interactions with the outer mitochondrial membrane and blocks the inappropriate interaction of ribosomes translating non-secretory nascent polypeptides with translocation sites in the membrane of the endoplasmic reticulum. EGD1 may act as a transcription factor that exert a negative effect on the expression of several genes that are transcribed by RNA polymerase II. This chain is Nascent polypeptide-associated complex subunit beta (EGD1), found in Gibberella zeae (strain ATCC MYA-4620 / CBS 123657 / FGSC 9075 / NRRL 31084 / PH-1) (Wheat head blight fungus).